Here is a 564-residue protein sequence, read N- to C-terminus: Arginine--tRNA ligase (564 aa).

The 'HIGH' region motif lies at 130-140; it reads ANPTGSLHIGH.

This sequence belongs to the class-I aminoacyl-tRNA synthetase family. Monomer.

Its subcellular location is the cytoplasm. The catalysed reaction is tRNA(Arg) + L-arginine + ATP = L-arginyl-tRNA(Arg) + AMP + diphosphate. This is Arginine--tRNA ligase from Malacoplasma penetrans (strain HF-2) (Mycoplasma penetrans).